The primary structure comprises 179 residues: HTH-type transcriptional regulator AldR (179 aa).

Residues Leu32 to Pro93 enclose the HTH asnC-type domain. The segment at residues Asn51–Arg70 is a DNA-binding region (H-T-H motif).

In terms of assembly, homooctamer. Homotetramer. Tetramer of dimers. The N-terminal DNA-binding domains are swapped, forming a dimer, and four dimers are assembled into an octamer through crystal symmetry.

The DNA-binding activity of AldR is modulated by interaction of AldR with various amino acids. Alanine, tryptophan, tyrosine and aspartate completely abolish the DNA binding ability of AldR. On the other hand, glutamate and asparagine reduce AldR binding to DNA but do not completely abolish it. Binding of amino acids can lead to structural modifications and changes in oligomeric association. Activity is also inhibited by 3 small molecule inhibitors, tetrahydroquinoline carbonitrile derivative (S010-0261), levothyroxine and liothyronine, which can disrupt the AldR-DNA complex. In terms of biological role, transcriptional regulator that might play a role under hypoxic conditions. Regulates the expression of ald, which encodes L-alanine dehydrogenase. Serves as both an activator for ald expression in the presence of L-alanine and a repressor in the absence of L-alanine. Acts by binding directly to the upstream region of the ald gene. Four AldR-binding sites (O2, O1, O4 and O3) were identified upstream of the ald gene. O2, O1 and O4 are required for the induction of ald expression by alanine, while O3 is directly involved in the repression of ald expression, by occluding the access of RNA polymerase to the ald promoter. In addition to O3, both O1 and O4 are also necessary for full repression of ald expression in the absence of alanine. In Mycobacterium tuberculosis (strain ATCC 25618 / H37Rv), this protein is HTH-type transcriptional regulator AldR.